Consider the following 128-residue polypeptide: MKKVKTVGKSKKEFITGVVHIRATFNNTFVNVTDVHGNTLCQTSVGACGFSGSRKSTPYAAGKAAEAAAKNAIERFGMKVVSVIIRGPGFGTEAAVKALQSCGLTVTSIADKTAIPHNGCRLRKKRRV.

It belongs to the universal ribosomal protein uS11 family. In terms of assembly, part of the 30S ribosomal subunit. Interacts with proteins S7 and S18. Binds to IF-3.

Located on the platform of the 30S subunit, it bridges several disparate RNA helices of the 16S rRNA. Forms part of the Shine-Dalgarno cleft in the 70S ribosome. The chain is Small ribosomal subunit protein uS11 from Wolbachia sp. subsp. Drosophila simulans (strain wRi).